The sequence spans 698 residues: Elongation factor G (698 aa).

Positions 11–291 constitute a tr-type G domain; it reads THFRNIGIAA…AVVDYLPSPL (281 aa). GTP contacts are provided by residues 20-27, 90-94, and 144-147; these read AHIDAGKT, DTPGH, and NKMD.

The protein belongs to the TRAFAC class translation factor GTPase superfamily. Classic translation factor GTPase family. EF-G/EF-2 subfamily.

It localises to the cytoplasm. Catalyzes the GTP-dependent ribosomal translocation step during translation elongation. During this step, the ribosome changes from the pre-translocational (PRE) to the post-translocational (POST) state as the newly formed A-site-bound peptidyl-tRNA and P-site-bound deacylated tRNA move to the P and E sites, respectively. Catalyzes the coordinated movement of the two tRNA molecules, the mRNA and conformational changes in the ribosome. In Deinococcus radiodurans (strain ATCC 13939 / DSM 20539 / JCM 16871 / CCUG 27074 / LMG 4051 / NBRC 15346 / NCIMB 9279 / VKM B-1422 / R1), this protein is Elongation factor G.